A 365-amino-acid polypeptide reads, in one-letter code: Eukaryotic translation initiation factor 3 subunit H (365 aa).

Positions 11–160 constitute an MPN domain; the sequence is VKVEALVVMK…LRAFRLSPKF (150 aa).

This sequence belongs to the eIF-3 subunit H family. As to quaternary structure, component of the eukaryotic translation initiation factor 3 (eIF-3) complex.

It is found in the cytoplasm. Component of the eukaryotic translation initiation factor 3 (eIF-3) complex, which is involved in protein synthesis of a specialized repertoire of mRNAs and, together with other initiation factors, stimulates binding of mRNA and methionyl-tRNAi to the 40S ribosome. The eIF-3 complex specifically targets and initiates translation of a subset of mRNAs involved in cell proliferation. The polypeptide is Eukaryotic translation initiation factor 3 subunit H (Aspergillus niger (strain ATCC MYA-4892 / CBS 513.88 / FGSC A1513)).